We begin with the raw amino-acid sequence, 626 residues long: Bifurcating [FeFe] hydrogenase beta subunit (626 aa).

198–201 (GGGG) provides a ligand contact to NAD(+). FMN-binding positions include Lys207 and 224–228 (NGDEG). NAD(+) is bound at residue Asp229. FMN is bound by residues 312–317 (FVCGEE) and 350–352 (INN). Residues Cys485, Cys488, Cys491, Cys531, Cys578, Cys581, Cys584, Cys588, Cys608, Cys611, Cys614, and Cys618 each coordinate [4Fe-4S] cluster. 4Fe-4S ferredoxin-type domains follow at residues 569 to 598 (KKYV…GERG) and 599 to 626 (KPYT…IELV).

This sequence belongs to the complex I 51 kDa subunit family. As to quaternary structure, heterotrimer composed of HydA (alpha subunit), HydB (beta subunit) and HydC (gamma subunit). Near neutral and acidic pH conditions favor oligomerization of the heterotrimeric holoenzyme. The cofactor is [2Fe-2S] cluster. Requires [4Fe-4S] cluster as cofactor. It depends on FMN as a cofactor.

The protein resides in the cytoplasm. It catalyses the reaction 2 H2 + 2 oxidized [2Fe-2S]-[ferredoxin] + NAD(+) = 2 reduced [2Fe-2S]-[ferredoxin] + NADH + 3 H(+). Catalyzes the oxidation of the physiological electron carriers NADH and reduced ferredoxin, coupled to the production of H(2). Acts as a bifurcating [FeFe] hydrogenase, which uses the exergonic oxidation of reduced ferredoxin to drive the unfavorable oxidation of NADH to produce H(2). The beta subunit contains flavin- and NAD-binding sites and is potentially the site for NADH oxidation, with the subsequent shuttling of electrons to the alpha subunit. This chain is Bifurcating [FeFe] hydrogenase beta subunit, found in Thermotoga maritima (strain ATCC 43589 / DSM 3109 / JCM 10099 / NBRC 100826 / MSB8).